We begin with the raw amino-acid sequence, 284 residues long: Serine/arginine-rich splicing factor RS2Z32 (284 aa).

One can recognise an RRM domain in the interval Thr11–Gly81. The disordered stretch occupies residues Ile74 to Gly97. 2 consecutive CCHC-type zinc fingers follow at residues Gly99–Ala116 and Asn121–Asn138. Residues Ile132–Pro284 form a disordered region. Basic residues predominate over residues Arg159 to Ser180. Ser166, Ser168, and Ser184 each carry phosphoserine. Positions Val186–Glu203 are enriched in basic and acidic residues. A phosphoserine mark is found at Ser205, Ser207, Ser214, Ser216, Ser225, Ser235, Ser255, Ser265, Ser277, and Ser281. Residues Lys209–Pro236 show a composition bias toward basic and acidic residues.

The protein belongs to the splicing factor SR family. RS2Z subfamily. As to quaternary structure, component of the spliceosome. In terms of processing, extensively phosphorylated on serine residues in the RS domain.

Its subcellular location is the nucleus. Functionally, probably involved in intron recognition and spliceosome assembly. This Arabidopsis thaliana (Mouse-ear cress) protein is Serine/arginine-rich splicing factor RS2Z32 (RS2Z32).